The sequence spans 294 residues: Cytidine deaminase (294 aa).

CMP/dCMP-type deaminase domains are found at residues 48-168 (DEDA…FGPK) and 186-294 (LTGD…VLLG). Residue 89–91 (NME) coordinates substrate. Histidine 102 provides a ligand contact to Zn(2+). Glutamate 104 (proton donor) is an active-site residue. Cysteine 129 and cysteine 132 together coordinate Zn(2+).

This sequence belongs to the cytidine and deoxycytidylate deaminase family. Homodimer. Zn(2+) serves as cofactor.

It carries out the reaction cytidine + H2O + H(+) = uridine + NH4(+). It catalyses the reaction 2'-deoxycytidine + H2O + H(+) = 2'-deoxyuridine + NH4(+). Its function is as follows. This enzyme scavenges exogenous and endogenous cytidine and 2'-deoxycytidine for UMP synthesis. The chain is Cytidine deaminase from Salmonella arizonae (strain ATCC BAA-731 / CDC346-86 / RSK2980).